The chain runs to 483 residues: V-type proton ATPase subunit H (483 aa).

Ser-483 is subject to Phosphoserine.

The protein belongs to the V-ATPase H subunit family. In terms of assembly, V-ATPase is a heteromultimeric enzyme made up of two complexes: the ATP-hydrolytic V1 complex and the proton translocation V0 complex. The V1 complex consists of three catalytic AB heterodimers that form a heterohexamer, three peripheral stalks each consisting of EG heterodimers, one central rotor including subunits D and F, and the regulatory subunits C and H. The proton translocation complex V0 consists of the proton transport subunit a, a ring of proteolipid subunits c9c'', rotary subunit d, subunits e and f, and the accessory subunits ATP6AP1/Ac45 and ATP6AP2/PRR. Interacts with AP2M1.

It localises to the cytoplasmic vesicle. Its subcellular location is the clathrin-coated vesicle membrane. Functionally, subunit of the V1 complex of vacuolar(H+)-ATPase (V-ATPase), a multisubunit enzyme composed of a peripheral complex (V1) that hydrolyzes ATP and a membrane integral complex (V0) that translocates protons. V-ATPase is responsible for acidifying and maintaining the pH of intracellular compartments and in some cell types, is targeted to the plasma membrane, where it is responsible for acidifying the extracellular environment. Subunit H is essential for V-ATPase activity, but not for the assembly of the complex. Involved in the endocytosis mediated by clathrin-coated pits, required for the formation of endosomes. This Sus scrofa (Pig) protein is V-type proton ATPase subunit H (ATP6V1H).